The sequence spans 1434 residues: Ankyrin and armadillo repeat-containing protein (1434 aa).

The chain crosses the membrane as a helical span at residues 309–329 (IRRGIGYLKLICFLIPFLLSL). ANK repeat units lie at residues 532–561 (AGYT…KVNQ), 569–598 (QGPT…DYTL), 602–631 (RGWM…SLLE), 638–667 (NQCT…NWRK), and 671–701 (KGNN…ELPV). ARM repeat units follow at residues 732 to 771 (DQYW…NIST), 773 to 812 (KSAV…DIAQ), 814 to 852 (ENKD…VLCI), 855 to 894 (ENNQ…EVGR), 897 to 936 (KEIQ…SLAS), and 1072 to 1112 (PVSQ…CIVL).

In terms of tissue distribution, ubiquitously expressed with highest level in pancreas and lowest in skeletal muscle.

The protein localises to the membrane. This is Ankyrin and armadillo repeat-containing protein (ANKAR) from Homo sapiens (Human).